Consider the following 93-residue polypeptide: Integration host factor subunit beta (93 aa).

The protein belongs to the bacterial histone-like protein family. Heterodimer of an alpha and a beta chain.

Functionally, this protein is one of the two subunits of integration host factor, a specific DNA-binding protein that functions in genetic recombination as well as in transcriptional and translational control. The chain is Integration host factor subunit beta (ihfB) from Mannheimia haemolytica (Pasteurella haemolytica).